A 232-amino-acid polypeptide reads, in one-letter code: Sugar fermentation stimulation protein homolog (232 aa).

Belongs to the SfsA family.

In Pyrobaculum arsenaticum (strain DSM 13514 / JCM 11321 / PZ6), this protein is Sugar fermentation stimulation protein homolog.